Consider the following 937-residue polypeptide: Aconitate hydratase A (937 aa).

[4Fe-4S] cluster contacts are provided by Cys-439, Cys-505, and Cys-508. Positions 898–921 are disordered; the sequence is KKESKSTQSTTSKGCGSADTSSET.

It belongs to the aconitase/IPM isomerase family. Monomer. The cofactor is [4Fe-4S] cluster.

The catalysed reaction is citrate = D-threo-isocitrate. It catalyses the reaction (2S,3R)-3-hydroxybutane-1,2,3-tricarboxylate = 2-methyl-cis-aconitate + H2O. The protein operates within carbohydrate metabolism; tricarboxylic acid cycle; isocitrate from oxaloacetate: step 2/2. It functions in the pathway organic acid metabolism; propanoate degradation. Involved in the catabolism of short chain fatty acids (SCFA) via the tricarboxylic acid (TCA)(acetyl degradation route) and probably the 2-methylcitrate cycle I (propionate degradation route). Catalyzes the reversible isomerization of citrate to isocitrate via cis-aconitate. Could catalyze the hydration of 2-methyl-cis-aconitate to yield (2R,3S)-2-methylisocitrate. The apo form of AcnA functions as a RNA-binding regulatory protein. This is Aconitate hydratase A (acn) from Francisella tularensis subsp. holarctica (strain LVS).